The chain runs to 215 residues: Peptide methionine sulfoxide reductase MsrA (215 aa).

Cys-58 is a catalytic residue.

This sequence belongs to the MsrA Met sulfoxide reductase family.

The catalysed reaction is L-methionyl-[protein] + [thioredoxin]-disulfide + H2O = L-methionyl-(S)-S-oxide-[protein] + [thioredoxin]-dithiol. It carries out the reaction [thioredoxin]-disulfide + L-methionine + H2O = L-methionine (S)-S-oxide + [thioredoxin]-dithiol. Has an important function as a repair enzyme for proteins that have been inactivated by oxidation. Catalyzes the reversible oxidation-reduction of methionine sulfoxide in proteins to methionine. The polypeptide is Peptide methionine sulfoxide reductase MsrA (Pseudomonas aeruginosa (strain UCBPP-PA14)).